The sequence spans 206 residues: VEL1-related protein YOR387C (206 aa).

The first 19 residues, 1 to 19, serve as a signal peptide directing secretion; sequence MSFLNIFTFFSVLVSVATA. N-linked (GlcNAc...) asparagine glycans are attached at residues Asn26, Asn48, Asn91, Asn139, Asn152, and Asn183.

Belongs to the VEL1 family. N-glycosylated.

The protein localises to the cytoplasm. Its subcellular location is the cytosol. The protein is VEL1-related protein YOR387C of Saccharomyces cerevisiae (strain ATCC 204508 / S288c) (Baker's yeast).